The primary structure comprises 370 residues: MPHQQILMLFGLLPVATNISTWWNFGSMLLACLTLQLLTGFFLAVHYTANINLAFSSIIHITRDVPYGWMMQNLHAIGASMFFICIYIHIARGLYYGSYLNKETWFSGTTLLIMLMATAFFGYVLPWGQMSFWAATVITNLLTAIPYLGSTMTTWLWGGFAINDPTLTRFFALHFILPFGIISLSSLHILLLHEEGSSNPLGTNSDIDKIPFHPYQTYKDMLMLTIMTIMLLTIVSFFPDIFNDPDSFSKANPLVTPQHIKPEWYFLFXYGILRSIPNKLGGALALTMSIMMLLTLPFTHTSKLRSMMFRPFMQLTFWTFTATFLVISWTATKPVEPPFTTISQVAALMYFLFFISNPIMGWLENKIMKL.

4 consecutive transmembrane segments (helical) span residues 25 to 45 (FGSMLLACLTLQLLTGFFLAV), 69 to 90 (WMMQNLHAIGASMFFICIYIHI), 105 to 125 (WFSGTTLLIMLMATAFFGYVL), and 170 to 190 (FFALHFILPFGIISLSSLHIL). His75 and His89 together coordinate heme b. The heme b site is built by His174 and His188. His193 lines the a ubiquinone pocket. 4 consecutive transmembrane segments (helical) span residues 218–238 (YKDMLMLTIMTIMLLTIVSFF), 280–300 (LGGALALTMSIMMLLTLPFTH), 312–332 (FMQLTFWTFTATFLVISWTAT), and 339–358 (FTTISQVAALMYFLFFISNP).

It belongs to the cytochrome b family. The cytochrome bc1 complex contains 3 respiratory subunits (MT-CYB, CYC1 and UQCRFS1), 2 core proteins (UQCRC1 and UQCRC2) and probably 6 low-molecular weight proteins. The cofactor is heme b.

The protein resides in the mitochondrion inner membrane. Functionally, component of the ubiquinol-cytochrome c reductase complex (complex III or cytochrome b-c1 complex) that is part of the mitochondrial respiratory chain. The b-c1 complex mediates electron transfer from ubiquinol to cytochrome c. Contributes to the generation of a proton gradient across the mitochondrial membrane that is then used for ATP synthesis. This chain is Cytochrome b (MT-CYB), found in Chilabothrus strigilatus mccraniei (Ragged Island boa constrictor).